The sequence spans 382 residues: Heme A synthase (382 aa).

7 helical membrane passes run 37–57 (IRVWLQILFALVFIMIAVGGL), 126–146 (VIGVVWALGFGYFLVRRQVPA), 152–172 (LLFLGLLGGAQGAIGWWMVAS), 188–208 (LATHLGLAFVILGFIAWYIME), 231–251 (STGLLHFTFLQILLGALVAGI), 288–308 (LVQFMHRVTGYVLILFTVVVW), and 332–352 (LQIVLGIVTVLYGAPAHIAIF). Histidine 293 contacts heme. Heme is bound at residue histidine 353. The helical transmembrane segment at 356 to 376 (LAVIVWVLILRARFLSGYPIA) threads the bilayer.

It belongs to the COX15/CtaA family. Type 2 subfamily. In terms of assembly, interacts with CtaB. It depends on heme b as a cofactor.

It localises to the cell membrane. It carries out the reaction Fe(II)-heme o + 2 A + H2O = Fe(II)-heme a + 2 AH2. The protein operates within porphyrin-containing compound metabolism; heme A biosynthesis; heme A from heme O: step 1/1. In terms of biological role, catalyzes the conversion of heme O to heme A by two successive hydroxylations of the methyl group at C8. The first hydroxylation forms heme I, the second hydroxylation results in an unstable dihydroxymethyl group, which spontaneously dehydrates, resulting in the formyl group of heme A. In Roseobacter denitrificans (strain ATCC 33942 / OCh 114) (Erythrobacter sp. (strain OCh 114)), this protein is Heme A synthase.